A 343-amino-acid polypeptide reads, in one-letter code: UPF0283 membrane protein blr7254 (343 aa).

3 helical membrane-spanning segments follow: residues 64 to 84 (GALF…LGVV), 97 to 117 (LGFV…VVIG), and 214 to 234 (IVTA…VAAL).

Belongs to the UPF0283 family.

The protein localises to the cell inner membrane. The protein is UPF0283 membrane protein blr7254 of Bradyrhizobium diazoefficiens (strain JCM 10833 / BCRC 13528 / IAM 13628 / NBRC 14792 / USDA 110).